The chain runs to 933 residues: Valine--tRNA ligase (933 aa).

The short motif at 58–68 (PNVTGSLHMGH) is the 'HIGH' region element. The 'KMSKS' region motif lies at 556 to 560 (KMSKS). An ATP-binding site is contributed by lysine 559. Coiled coils occupy residues 807 to 833 (VTKN…ANKV) and 864 to 933 (EGLV…LGLK).

The protein belongs to the class-I aminoacyl-tRNA synthetase family. ValS type 1 subfamily. In terms of assembly, monomer.

It localises to the cytoplasm. It carries out the reaction tRNA(Val) + L-valine + ATP = L-valyl-tRNA(Val) + AMP + diphosphate. Catalyzes the attachment of valine to tRNA(Val). As ValRS can inadvertently accommodate and process structurally similar amino acids such as threonine, to avoid such errors, it has a 'posttransfer' editing activity that hydrolyzes mischarged Thr-tRNA(Val) in a tRNA-dependent manner. This Prochlorococcus marinus (strain SARG / CCMP1375 / SS120) protein is Valine--tRNA ligase.